The primary structure comprises 324 residues: Quinolinate synthase 1 (324 aa).

Positions 48 and 66 each coordinate iminosuccinate. Cysteine 111 is a binding site for [4Fe-4S] cluster. Iminosuccinate is bound by residues 137–139 (YVN) and serine 154. A [4Fe-4S] cluster-binding site is contributed by cysteine 196. Residues 222–224 (HPE) and threonine 239 each bind iminosuccinate. Cysteine 282 is a binding site for [4Fe-4S] cluster.

This sequence belongs to the quinolinate synthase family. Type 2 subfamily. It depends on [4Fe-4S] cluster as a cofactor.

The protein resides in the cytoplasm. It carries out the reaction iminosuccinate + dihydroxyacetone phosphate = quinolinate + phosphate + 2 H2O + H(+). Its pathway is cofactor biosynthesis; NAD(+) biosynthesis; quinolinate from iminoaspartate: step 1/1. Catalyzes the condensation of iminoaspartate with dihydroxyacetone phosphate to form quinolinate. The sequence is that of Quinolinate synthase 1 from Mesorhizobium japonicum (strain LMG 29417 / CECT 9101 / MAFF 303099) (Mesorhizobium loti (strain MAFF 303099)).